The primary structure comprises 688 residues: MSERRILVTSALPYANGPIHIGHMVEYIQTDIWVRFQRMRGHETYYVGADDTHGTPVMLRAEKEGITPRQLIERVWTEHKRDFDNFLVSFDNYYSTDSDENRELCERVYLKLKEAGLIDVREVEQFYDPVKEMFLPDRFIKGECPKCGAKDQYGDSCEVCGATYQPTDLKNPYSVVSGATPVRKSSEHYFFKLSDPRCETFLRDWVGDLAQPEATNKMREWLGDEGESTLSDWDISRDAPYFGFEIPGAPGKYFYVWLDAPVGYYASFKNLCGKLGLDFDAWVSTHSTAEQYHFIGKDILYFHTLFWPAMLQFSGHRTPTNVFAHGFLTVDGAKMSKSRGTFITAQSYIDTGLNPEWLRYYFAAKLNATMEDLDLNLDDFIARVNSDLVGKFVNIASRSAGFLVKRFEGRVNDAALANPLMVQLREAAPQIADLYEKREYSKALRTVMELADAVNAYVDTEKPWDLAKDEAQRDKLHAACSVALEAFRLLAVYLKPILPSTVARIEAFLNIEPLNWRAIDAQLSSARPIQPYSHLMTRVDKKQVDALLEANRQSLQATVDAVPAANGTPAVEPMAETIAIDDFAKIDLRVAKIVACQRVEGSNKLLQLTLDVGEGKTRNVFSGIQSAYAPEDLVGKLTVMVANLAPRKMKFGMSEGMVLAASAADEKAQPGLYILEPHAGAVPGMRVR.

The 'HIGH' region signature appears at 13–23 (PYANGPIHIGH). Residues Cys144, Cys147, Cys157, and Cys160 each coordinate Zn(2+). Residues 334 to 338 (KMSKS) carry the 'KMSKS' region motif. ATP is bound at residue Lys337. A tRNA-binding domain is found at 582–688 (DFAKIDLRVA…AGAVPGMRVR (107 aa)).

This sequence belongs to the class-I aminoacyl-tRNA synthetase family. MetG type 1 subfamily. In terms of assembly, homodimer. It depends on Zn(2+) as a cofactor.

The protein resides in the cytoplasm. It catalyses the reaction tRNA(Met) + L-methionine + ATP = L-methionyl-tRNA(Met) + AMP + diphosphate. Is required not only for elongation of protein synthesis but also for the initiation of all mRNA translation through initiator tRNA(fMet) aminoacylation. In Ralstonia nicotianae (strain ATCC BAA-1114 / GMI1000) (Ralstonia solanacearum), this protein is Methionine--tRNA ligase.